We begin with the raw amino-acid sequence, 441 residues long: MYKSRLQELCQQRRWAPPEYTHRCAGPAHAPLFGATVSVNGVEFRTPEDAARSAKEAHNIAAKAAFDHLSSLPLPPPPPPSENQSSYKSQLQIYAQKKGKLLPSYQTIREGPGHASRFKSVVTVDGKAFESPEYFHTVKEAESAAAKLALMSLPQEASSSEQVPVQPLSYKNLLQELAQKHGFSLPVYSTTSDGSVQVPMFKSTVVFQDGSFQGEPANTKKQAEMNAARVAFQHFEDRRKNALSSTVLRGPHLGQGTVHISAGQVKIAEPVFSVPLASTATSHSATGATDRDYHSLGSTNPLPIAKSTNCADVHIQPCEFKDEKPAFPEPKTVLEVMDSSPELTPLEDAYSAPVASTSTVSSSGCGSDPLASASTVNSTGCGSVPLASASTVSSTGCGCSLLTNRVQVYPRRPDLVLPEGATVLPFSDDVWVAVSLPTLNH.

3 consecutive DRBM domains span residues 1–71, 86–155, and 169–237; these read MYKS…HLSS, SYKS…SLPQ, and SYKN…HFED. The tract at residues 69–88 is disordered; it reads LSSLPLPPPPPPSENQSSYK.

In terms of biological role, binds double-stranded RNA. This is Double-stranded RNA-binding protein 1 (DRB1) from Oryza sativa subsp. japonica (Rice).